A 752-amino-acid chain; its full sequence is Multifunctional tryptophan biosynthesis protein (752 aa).

The 201-residue stretch at 23 to 223 (NVILIDNYDS…LELTAGTWDN (201 aa)) folds into the Glutamine amidotransferase type-1 domain. 74 to 76 (GPG) lines the L-glutamine pocket. The active-site Nucleophile; for GATase activity is the Cys-102. L-glutamine-binding positions include Gln-106 and 152–153 (SL). Active-site for GATase activity residues include His-197 and Glu-199. The interval 239 to 503 (ILDKIYAHRK…DTSAFVAQLL (265 aa)) is indole-3-glycerol phosphate synthase. The segment at 519–752 (LVKICGTRTE…FVKSAKSIRQ (234 aa)) is N-(5'-phosphoribosyl)anthranilate isomerase.

It carries out the reaction N-(5-phospho-beta-D-ribosyl)anthranilate = 1-(2-carboxyphenylamino)-1-deoxy-D-ribulose 5-phosphate. It catalyses the reaction 1-(2-carboxyphenylamino)-1-deoxy-D-ribulose 5-phosphate + H(+) = (1S,2R)-1-C-(indol-3-yl)glycerol 3-phosphate + CO2 + H2O. The enzyme catalyses chorismate + L-glutamine = anthranilate + pyruvate + L-glutamate + H(+). It functions in the pathway amino-acid biosynthesis; L-tryptophan biosynthesis; L-tryptophan from chorismate: step 1/5. The protein operates within amino-acid biosynthesis; L-tryptophan biosynthesis; L-tryptophan from chorismate: step 3/5. Its pathway is amino-acid biosynthesis; L-tryptophan biosynthesis; L-tryptophan from chorismate: step 4/5. In terms of biological role, trifunctional enzyme bearing the Gln amidotransferase (GATase) domain of anthranilate synthase, indole-glycerolphosphate synthase, and phosphoribosylanthranilate isomerase activities. The protein is Multifunctional tryptophan biosynthesis protein (trpC) of Penicillium chrysogenum (Penicillium notatum).